Here is a 100-residue protein sequence, read N- to C-terminus: Urease subunit gamma (100 aa).

This sequence belongs to the urease gamma subunit family. In terms of assembly, heterotrimer of UreA (gamma), UreB (beta) and UreC (alpha) subunits. Three heterotrimers associate to form the active enzyme.

Its subcellular location is the cytoplasm. The catalysed reaction is urea + 2 H2O + H(+) = hydrogencarbonate + 2 NH4(+). It participates in nitrogen metabolism; urea degradation; CO(2) and NH(3) from urea (urease route): step 1/1. This is Urease subunit gamma from Nocardia farcinica (strain IFM 10152).